A 132-amino-acid polypeptide reads, in one-letter code: MNDTVTIRTRKFMTNRLLQRKQMVVDVLHPGKATVPKTEIREKLAKMYKTTPDVVFVFGFRTQFGGGKTTGFAMVYDSLDYAKKNEPKHRLATHGLYEKKKTSRKQRTERQNRMKKVRSIKKASVGAAGKKN.

Residues 91–132 (LATHGLYEKKKTSRKQRTERQNRMKKVRSIKKASVGAAGKKN) form a disordered region. Residues 96-112 (LYEKKKTSRKQRTERQN) show a composition bias toward basic and acidic residues.

Belongs to the eukaryotic ribosomal protein eS24 family. As to quaternary structure, component of the small ribosomal subunit.

Its subcellular location is the cytoplasm. Functionally, component of the small ribosomal subunit. The ribosome is a large ribonucleoprotein complex responsible for the synthesis of proteins in the cell. Required for processing of pre-rRNA and maturation of 40S ribosomal subunits. The sequence is that of Small ribosomal subunit protein eS24 (rps24) from Oryzias latipes (Japanese rice fish).